The sequence spans 288 residues: Acetyl-coenzyme A carboxylase carboxyl transferase subunit beta (288 aa).

The CoA carboxyltransferase N-terminal domain occupies 34–288 (LFAKCPGCKQ…TLLSFHGGVQ (255 aa)). Zn(2+) contacts are provided by Cys38, Cys41, Cys56, and Cys59. The segment at 38 to 59 (CPGCKQAIYQKDLGQAKICPNC) adopts a C4-type zinc-finger fold.

This sequence belongs to the AccD/PCCB family. As to quaternary structure, acetyl-CoA carboxylase is a heterohexamer composed of biotin carboxyl carrier protein (AccB), biotin carboxylase (AccC) and two subunits each of ACCase subunit alpha (AccA) and ACCase subunit beta (AccD). Requires Zn(2+) as cofactor.

The protein resides in the cytoplasm. It carries out the reaction N(6)-carboxybiotinyl-L-lysyl-[protein] + acetyl-CoA = N(6)-biotinyl-L-lysyl-[protein] + malonyl-CoA. The protein operates within lipid metabolism; malonyl-CoA biosynthesis; malonyl-CoA from acetyl-CoA: step 1/1. Its function is as follows. Component of the acetyl coenzyme A carboxylase (ACC) complex. Biotin carboxylase (BC) catalyzes the carboxylation of biotin on its carrier protein (BCCP) and then the CO(2) group is transferred by the transcarboxylase to acetyl-CoA to form malonyl-CoA. This chain is Acetyl-coenzyme A carboxylase carboxyl transferase subunit beta, found in Streptococcus thermophilus (strain ATCC BAA-491 / LMD-9).